Reading from the N-terminus, the 38-residue chain is Large ribosomal subunit protein bL36 (38 aa).

Belongs to the bacterial ribosomal protein bL36 family.

This Streptococcus agalactiae serotype III (strain NEM316) protein is Large ribosomal subunit protein bL36.